The primary structure comprises 124 residues: Small ribosomal subunit protein uS13 (124 aa).

A disordered region spans residues 95 to 124 (GLPVRGQRTKTNARTRKGPKRTIAGKKKAR).

The protein belongs to the universal ribosomal protein uS13 family. In terms of assembly, part of the 30S ribosomal subunit. Forms a loose heterodimer with protein S19. Forms two bridges to the 50S subunit in the 70S ribosome.

Located at the top of the head of the 30S subunit, it contacts several helices of the 16S rRNA. In the 70S ribosome it contacts the 23S rRNA (bridge B1a) and protein L5 of the 50S subunit (bridge B1b), connecting the 2 subunits; these bridges are implicated in subunit movement. Contacts the tRNAs in the A and P-sites. The polypeptide is Small ribosomal subunit protein uS13 (Mycobacterium avium (strain 104)).